The following is a 2055-amino-acid chain: Citron Rho-interacting kinase (2055 aa).

N-acetylmethionine is present on methionine 1. In terms of domain architecture, Protein kinase spans 97–359; sequence FEVRSLVGCG…FEGLCCHPFF (263 aa). ATP-binding positions include 103–111 and lysine 126; that span reads VGCGHFAEV. Residue aspartate 221 is the Proton acceptor of the active site. Residues 360 to 430 form the AGC-kinase C-terminal domain; that stretch reads ARTDWNNIRN…SKALGYLGRS (71 aa). Phosphoserine occurs at positions 432, 439, 479, and 581. Coiled coils occupy residues 441–1086, 1091–1247, and 1275–1325; these read AKVS…QWEA, LGDE…VLYS, and AKKK…RKAT. The tract at residues 1132 to 1328 is interaction with Rho/Rac; the sequence is LAVKEHKAEI…AAHRKATDHP (197 aa). Tyrosine 1237 is subject to Phosphotyrosine. A compositionally biased stretch (basic and acidic residues) spans 1316–1329; the sequence is REEAAHRKATDHPH. Disordered stretches follow at residues 1316–1336 and 1348–1377; these read REEAAHRKATDHPHPSTPATA and SPEHQPSAMSLLAPPSSRRKESSTPEEFSR. Residues 1353 to 1363 show a composition bias toward low complexity; sequence PSAMSLLAPPS. Over residues 1365–1377 the composition is skewed to basic and acidic residues; sequence RRKESSTPEEFSR. The Phorbol-ester/DAG-type zinc-finger motif lies at 1388–1437; the sequence is PHRFNVGLNMRATKCAVCLDTVHFGRQASKCLECQVMCHPKCSTCLPATC. The PH domain occupies 1469–1589; that stretch reads SLHLEGWMKV…WVTALESVVA (121 aa). One can recognise a CNH domain in the interval 1617–1907; that stretch reads RLDMNCTLPF…RYLGPAISSG (291 aa). The residue at position 1747 (lysine 1747) is an N6-acetyllysine. A disordered region spans residues 1932–2040; that stretch reads SGTEQHRVPS…RGRLPAGAVR (109 aa). The segment covering 1939-1948 has biased composition (polar residues); sequence VPSTSRSSPN. Serine 1966 bears the Phosphoserine mark. The span at 1974-2031 shows a compositional bias: basic and acidic residues; sequence SHPREPSTPHRYRDREGRTELRRDKSPGRPLEREKSPGRMLSTRRERSPGRLFEDSSR. The SH3-binding motif lies at 1979-1984; sequence PSTPHR. Serine 2021 bears the Phosphoserine mark. Threonine 2041 carries the post-translational modification Phosphothreonine.

The protein belongs to the protein kinase superfamily. AGC Ser/Thr protein kinase family. Interacts with TTC3. Homodimer. Directly interacts with KIF14 depending on the activation state (stronger interaction with the kinase-dead form). As to expression, a major signal was observed in testis and brain, but it was also detected in thymus, spleen, kidney, heart and lung.

The protein localises to the cytoplasm. The enzyme catalyses L-seryl-[protein] + ATP = O-phospho-L-seryl-[protein] + ADP + H(+). It catalyses the reaction L-threonyl-[protein] + ATP = O-phospho-L-threonyl-[protein] + ADP + H(+). Its function is as follows. Plays a role in cytokinesis. Required for KIF14 localization to the central spindle and midbody. Probable RHO/RAC effector that binds to the GTP-bound forms of RHO and RAC1. It probably binds p21 with a tighter specificity in vivo. Displays serine/threonine protein kinase activity. Plays an important role in the regulation of cytokinesis and the development of the central nervous system. Phosphorylates MYL9/MLC2. In Mus musculus (Mouse), this protein is Citron Rho-interacting kinase (Cit).